Consider the following 395-residue polypeptide: Phosphoglycerate kinase (395 aa).

Substrate is bound by residues 21-23, Arg36, 59-62, Arg113, and Arg146; these read DLN and HLGR. ATP-binding positions include Lys197, Glu324, and 350–353; that span reads GGDT.

Belongs to the phosphoglycerate kinase family. In terms of assembly, monomer.

The protein localises to the cytoplasm. It carries out the reaction (2R)-3-phosphoglycerate + ATP = (2R)-3-phospho-glyceroyl phosphate + ADP. It participates in carbohydrate degradation; glycolysis; pyruvate from D-glyceraldehyde 3-phosphate: step 2/5. In Acinetobacter baumannii (strain ACICU), this protein is Phosphoglycerate kinase.